A 548-amino-acid chain; its full sequence is MAAKDVKFGIDARNKMLRGVNVLADAVKVTLGPKGRNVVLDKSFGAPVITKDGVSVAREIELEDKFENMGAQMVKEVASKANDAAGDGTTTATVLAQAIIAEGLKAVAAGMNPMDLKRGIDKAVVGAVEELKKLSVPCSDTKAIAQVGTISANSDETVGTLIAQAMEKVGKEGVITVEEGTGLEDELDVVEGMQFDRGYLSPYFINKPETGTAELENPFILLVDKKVSNIRELLPVLEGVAKANKPLLIIAEDVEGEALATLVVNNMRGIVKVAAVKAPGFGDRRKAMLQDIAILTNGTVISEEIGMELEKATLEDLGQAKRVVINKDTTTIIDGLGEQEAISGRVAQIRQQIEDATSDYDREKLQERVAKLAGGVAVIKVGAATEVEMKEKRARVDDALHATRAAVEEGVVAGGGTALVRVANALREMTGDNEEQTVGIRVALRAMEAPMRQIVANAGEEPSVVVNDVKAGQGNYGYNAATEAYGDMIEMGILDPTKVTRSALQFAASIAGLMITTEAMVTDLPKDEKMDLGAAGGMGGMGGMGGMM.

Residues 30–33 (TLGP), lysine 51, 87–91 (DGTTT), glycine 415, 479–481 (NAA), and aspartate 495 contribute to the ATP site.

This sequence belongs to the chaperonin (HSP60) family. As to quaternary structure, forms a cylinder of 14 subunits composed of two heptameric rings stacked back-to-back. Interacts with the co-chaperonin GroES.

The protein localises to the cytoplasm. The catalysed reaction is ATP + H2O + a folded polypeptide = ADP + phosphate + an unfolded polypeptide.. Its function is as follows. Together with its co-chaperonin GroES, plays an essential role in assisting protein folding. The GroEL-GroES system forms a nano-cage that allows encapsulation of the non-native substrate proteins and provides a physical environment optimized to promote and accelerate protein folding. The sequence is that of Chaperonin GroEL from Proteus mirabilis (strain HI4320).